The following is a 184-amino-acid chain: Protein Syd (184 aa).

The protein belongs to the Syd family.

The protein localises to the cell inner membrane. Functionally, interacts with the SecY protein in vivo. May bind preferentially to an uncomplexed state of SecY, thus functioning either as a chelating agent for excess SecY in the cell or as a regulatory factor that negatively controls the translocase function. This chain is Protein Syd, found in Photobacterium profundum (strain SS9).